Here is a 368-residue protein sequence, read N- to C-terminus: Ribosomal RNA large subunit methyltransferase M (368 aa).

Residues Ser-189, 222–225, Asp-241, Asp-261, and Asp-278 contribute to the S-adenosyl-L-methionine site; that span reads CPGG. Lys-307 acts as the Proton acceptor in catalysis.

This sequence belongs to the class I-like SAM-binding methyltransferase superfamily. RNA methyltransferase RlmE family. RlmM subfamily. As to quaternary structure, monomer.

It localises to the cytoplasm. The catalysed reaction is cytidine(2498) in 23S rRNA + S-adenosyl-L-methionine = 2'-O-methylcytidine(2498) in 23S rRNA + S-adenosyl-L-homocysteine + H(+). Catalyzes the 2'-O-methylation at nucleotide C2498 in 23S rRNA. In Yersinia pestis bv. Antiqua (strain Angola), this protein is Ribosomal RNA large subunit methyltransferase M.